Reading from the N-terminus, the 431-residue chain is tRNA(Ile)-lysidine synthase (431 aa).

19–24 lines the ATP pocket; that stretch reads STGIDS.

This sequence belongs to the tRNA(Ile)-lysidine synthase family.

The protein localises to the cytoplasm. It carries out the reaction cytidine(34) in tRNA(Ile2) + L-lysine + ATP = lysidine(34) in tRNA(Ile2) + AMP + diphosphate + H(+). Ligates lysine onto the cytidine present at position 34 of the AUA codon-specific tRNA(Ile) that contains the anticodon CAU, in an ATP-dependent manner. Cytidine is converted to lysidine, thus changing the amino acid specificity of the tRNA from methionine to isoleucine. This chain is tRNA(Ile)-lysidine synthase, found in Staphylococcus aureus (strain MW2).